A 450-amino-acid polypeptide reads, in one-letter code: Putative nucleolar protein 5-3 (450 aa).

One can recognise a Nop domain in the interval 252-370 (IAPNLTALVG…LEARLRNLEG (119 aa)). The interval 375 to 423 (ACEEEEEVNDKDTKKEADDEEEPKTEECSKKRKKEAELETVEDPAKKSK) is disordered. A compositionally biased stretch (basic and acidic residues) spans 399 to 423 (TEECSKKRKKEAELETVEDPAKKSK).

It belongs to the NOP5/NOP56 family.

The protein resides in the nucleus. The protein localises to the nucleolus. Functionally, required for 60S ribosomal subunit biogenesis. In Arabidopsis thaliana (Mouse-ear cress), this protein is Putative nucleolar protein 5-3 (NOP5-3).